We begin with the raw amino-acid sequence, 828 residues long: Chitin synthase 7 (828 aa).

6 consecutive transmembrane segments (helical) span residues 17 to 37 (VIVG…VAAF), 57 to 77 (AVVV…IMVV), 95 to 115 (VGLQ…PWLF), 444 to 464 (FMQN…LAIL), 473 to 493 (LPVG…IYFG), and 501 to 521 (IWLY…YMVY). An N-linked (GlcNAc...) asparagine glycan is attached at Asn-615. Low complexity-rich tracts occupy residues 740–752 (SLVS…SNSN) and 813–822 (SNNDPNNSNS). Disordered regions lie at residues 740 to 780 (SLVS…LGRA) and 793 to 828 (LEIG…HQQR). Asn-818 is a glycosylation site (N-linked (GlcNAc...) asparagine).

It belongs to the chitin synthase family. Class VII subfamily.

The protein localises to the membrane. It carries out the reaction [(1-&gt;4)-N-acetyl-beta-D-glucosaminyl](n) + UDP-N-acetyl-alpha-D-glucosamine = [(1-&gt;4)-N-acetyl-beta-D-glucosaminyl](n+1) + UDP + H(+). In terms of biological role, polymerizes chitin, a structural polymer of the cell wall and septum, by transferring the sugar moiety of UDP-GlcNAc to the non-reducing end of the growing chitin polymer. Required for normal appressorial chitin content and for the normal formation and function of these infection structures. The protein is Chitin synthase 7 of Pyricularia oryzae (strain 70-15 / ATCC MYA-4617 / FGSC 8958) (Rice blast fungus).